Reading from the N-terminus, the 500-residue chain is Probable cytosol aminopeptidase (500 aa).

Mn(2+) contacts are provided by lysine 264 and aspartate 269. The active site involves lysine 276. Mn(2+) is bound by residues aspartate 287, aspartate 346, and glutamate 348. Residue arginine 350 is part of the active site.

This sequence belongs to the peptidase M17 family. The cofactor is Mn(2+).

It localises to the cytoplasm. The catalysed reaction is Release of an N-terminal amino acid, Xaa-|-Yaa-, in which Xaa is preferably Leu, but may be other amino acids including Pro although not Arg or Lys, and Yaa may be Pro. Amino acid amides and methyl esters are also readily hydrolyzed, but rates on arylamides are exceedingly low.. The enzyme catalyses Release of an N-terminal amino acid, preferentially leucine, but not glutamic or aspartic acids.. Functionally, presumably involved in the processing and regular turnover of intracellular proteins. Catalyzes the removal of unsubstituted N-terminal amino acids from various peptides. The protein is Probable cytosol aminopeptidase of Rickettsia canadensis (strain McKiel).